The primary structure comprises 302 residues: Catechol 1,2-dioxygenase (302 aa).

Fe cation is bound by residues Tyr164, Tyr198, His222, and His224.

The protein belongs to the intradiol ring-cleavage dioxygenase family. Requires Fe(3+) as cofactor.

The catalysed reaction is catechol + O2 = cis,cis-muconate + 2 H(+). It participates in aromatic compound metabolism; beta-ketoadipate pathway; 5-oxo-4,5-dihydro-2-furylacetate from catechol: step 1/3. The chain is Catechol 1,2-dioxygenase (pheB) from Pseudomonas sp. (strain EST1001).